Reading from the N-terminus, the 437-residue chain is Sulfite reductase, dissimilatory-type subunit alpha (437 aa).

Residues cysteine 177, cysteine 183, cysteine 221, cysteine 225, cysteine 284, cysteine 303, cysteine 306, and cysteine 309 each coordinate [4Fe-4S] cluster. Residues 294–322 form the 4Fe-4S ferredoxin-type domain; it reads SKLSIDNKECVRCMHCINTMPRALHIGDE.

In terms of assembly, heterohexamer of two alpha, two beta and two gamma subunits.

Its function is as follows. Part of the complex that catalyzes the reduction of sulfite to sulfide. The alpha and beta subunits may have arisen by gene duplication. They both bind 2 iron-sulfur clusters, but the alpha subunit seems to be catalytically inactive, due to substitutions along the putative substrate access channel, and because it binds sirohydrochlorin (the dematallated form of siroheme) instead of siroheme. In Nitratidesulfovibrio vulgaris (strain ATCC 29579 / DSM 644 / CCUG 34227 / NCIMB 8303 / VKM B-1760 / Hildenborough) (Desulfovibrio vulgaris), this protein is Sulfite reductase, dissimilatory-type subunit alpha (dsvA).